The primary structure comprises 782 residues: Polyribonucleotide nucleotidyltransferase (782 aa).

Residues aspartate 514 and aspartate 520 each coordinate Mg(2+). The 60-residue stretch at 580-639 (PRIITIKIPVDQIGAVIGPKGKIINQIQDDTGAEITIEDDGTIYIGATEGTAAEAARAAI) folds into the KH domain. Residues 651-723 (GERYLGTVVK…ARGKLSLVPV (73 aa)) enclose the S1 motif domain. The segment covering 734 to 753 (AGAGESAASGGAPRSAGGPQ) has biased composition (low complexity). The interval 734–782 (AGAGESAASGGAPRSAGGPQPREHQGPGRPRGRGGDHGGEGRQRTRRRH) is disordered. Basic and acidic residues predominate over residues 766-776 (RGGDHGGEGRQ).

This sequence belongs to the polyribonucleotide nucleotidyltransferase family. It depends on Mg(2+) as a cofactor.

The protein resides in the cytoplasm. It carries out the reaction RNA(n+1) + phosphate = RNA(n) + a ribonucleoside 5'-diphosphate. Its function is as follows. Involved in mRNA degradation. Catalyzes the phosphorolysis of single-stranded polyribonucleotides processively in the 3'- to 5'-direction. In Acidothermus cellulolyticus (strain ATCC 43068 / DSM 8971 / 11B), this protein is Polyribonucleotide nucleotidyltransferase.